Consider the following 92-residue polypeptide: Tachykinin-2 (92 aa).

The signal sequence occupies residues 1–22 (MIRVGLILCCIFIVGVFEASSA). The propeptide occupies 23–37 (DDILTAHNLIKRSEV). The residue at position 49 (methionine 49) is a Methionine amide. The propeptide occupies 52-92 (SEELTRRLIQHPGSMSETSKRGPPKKGDFNPNELKPESNIC). The disordered stretch occupies residues 61–92 (QHPGSMSETSKRGPPKKGDFNPNELKPESNIC).

It belongs to the tachykinin family. As to expression, expressed in the posterior salivary gland and more specifically in the mucus-secreting gland cells.

Its subcellular location is the secreted. Tachykinins are active peptides which excite neurons, evoke behavioral responses, are potent vasodilators and secretagogues, and contract (directly or indirectly) many smooth muscles. This is Tachykinin-2 from Octopus vulgaris (Common octopus).